Consider the following 257-residue polypeptide: Movement protein (257 aa).

A disordered region spans residues 212–257; sequence NQSKKGSNKYVGKRNDNKGLNKEGKLFDKVRIGQNSESSDAESSSF. Residues 224-242 are compositionally biased toward basic and acidic residues; sequence KRNDNKGLNKEGKLFDKVR. The span at 247-257 shows a compositional bias: low complexity; that stretch reads SESSDAESSSF.

It belongs to the tobamovirus movement protein family.

Its subcellular location is the host cytoplasm. The protein localises to the host cytoskeleton. The protein resides in the host cell junction. It localises to the host plasmodesma. In terms of biological role, transports viral genome to neighboring plant cells directly through plasmosdesmata, without any budding. The movement protein allows efficient cell to cell propagation, by bypassing the host cell wall barrier. Forms a ribonucleoprotein complex with viral RNA. Binds microtubules and modulates microtubule stability. Can bind double-stranded DNA. The sequence is that of Movement protein (MP) from Vicia faba (Broad bean).